The sequence spans 468 residues: MDLSGCRDIISSLPEAISCHILSFLPTKEAASTSVLSKKWRYLFAFVPNLDLDESVYLNPENETEVSSSFMDFVDRVLALQGNSPLHKFSLKIGDGVEPDRIIPWINNVLERGVSDLDLHVYMETEFVFPSEMFLSKTLVRLKLMLYPLLEFEDVYLPKLKTLYIDSCYFEKYGIGLTKLLSGCPILEDLVLDDIPWCTWDFASVSVPTLKRLTFSTQVRDEFPKSVSIDTPNLVYLKFTDTVAGKYPKVNFDSLVEAHIDLRLLQGHQGYGENDMVGNATDFIMRICNVKTLYLSSNTLQVLTYSCDAIPIFNNLTHLTIESNPEVGWQSLPGLLKNSPNLETLIFQGLIHKATDKCGDVCLCKPREEIRSCLASSPVKVIKILKFGEISDDMEKQREQIKYFLETMPNLEKMILYYNTTSVEDVTEVSSRLQRLVSKLASSTCIVQLISDNLSLSSTVSTNGLLCF.

An F-box domain is found at 7–60; sequence RDIISSLPEAISCHILSFLPTKEAASTSVLSKKWRYLFAFVPNLDLDESVYLNP. LRR repeat units lie at residues 114–136, 138–167, 169–194, 216–241, 292–323, and 324–349; these read VSDL…MFLS, TLVR…YIDS, YFEK…VLDD, STQV…KFTD, TLYL…TIES, and NPEV…IFQG.

In Arabidopsis thaliana (Mouse-ear cress), this protein is F-box/LRR-repeat protein At4g14096.